Reading from the N-terminus, the 104-residue chain is UPF0213 protein ORF82 (104 aa).

In terms of domain architecture, GIY-YIG spans 7–83 (KVWCVYIVRR…KRKRGKYFKL (77 aa)).

It belongs to the UPF0213 family.

This is UPF0213 protein ORF82 from Orgyia pseudotsugata (Douglas-fir tussock moth).